The following is a 240-amino-acid chain: BLOC-1-related complex subunit 8 homolog (240 aa).

2 disordered regions span residues 1 to 33 and 163 to 240; these read MSSILKSSTGSNHSSTSNHSSINNISQLSGSHG and KTFS…EKIN. 2 stretches are compositionally biased toward low complexity: residues 7–26 and 163–179; these read SSTGSNHSSTSNHSSINNIS and KTFSSFQQQHKIYQQQQ. A compositionally biased stretch (polar residues) spans 180 to 190; that stretch reads TNLTPSKPTLS. Low complexity predominate over residues 196-205; it reads DNNNNNNNLN. A compositionally biased stretch (basic and acidic residues) spans 208–240; the sequence is EKIEKEEKIEKEDEGKEKDEKEKDDKDLNEKIN. A coiled-coil region spans residues 211-239; that stretch reads EKEEKIEKEDEGKEKDEKEKDDKDLNEKI.

It belongs to the BORCS8 family.

The protein localises to the lysosome membrane. Its function is as follows. May participate in the coupling of lysosomes to microtubule plus-end-directed kinesin motor. In Dictyostelium discoideum (Social amoeba), this protein is BLOC-1-related complex subunit 8 homolog.